Reading from the N-terminus, the 203-residue chain is Urease accessory protein UreG (203 aa).

13 to 20 (GPVGSGKT) contacts GTP.

This sequence belongs to the SIMIBI class G3E GTPase family. UreG subfamily. Homodimer. UreD, UreF and UreG form a complex that acts as a GTP-hydrolysis-dependent molecular chaperone, activating the urease apoprotein by helping to assemble the nickel containing metallocenter of UreC. The UreE protein probably delivers the nickel.

Its subcellular location is the cytoplasm. Functionally, facilitates the functional incorporation of the urease nickel metallocenter. This process requires GTP hydrolysis, probably effectuated by UreG. In Methylobacillus flagellatus (strain ATCC 51484 / DSM 6875 / VKM B-1610 / KT), this protein is Urease accessory protein UreG.